Consider the following 548-residue polypeptide: Organic cation transporter protein (548 aa).

Over 1–22 the chain is Cytoplasmic; the sequence is MGYDDVITHLGEFGPYQKRIYY. Residues 23–43 form a helical membrane-spanning segment; the sequence is LLCLPAIVCAFHKLAGVFLLA. The Extracellular segment spans residues 44-127; it reads KPDFRCALPY…TEWNLVCSRS (84 aa). N-linked (GlcNAc...) asparagine glycosylation is found at Asn55, Asn67, Asn89, and Asn97. The helical transmembrane segment at 128-148 threads the bilayer; the sequence is LLSATSDSLFMLGVLLGSLIF. At 149-158 the chain is on the cytoplasmic side; that stretch reads GQMSDKLGRK. The helical transmembrane segment at 159–179 threads the bilayer; that stretch reads PTFFASLVLQLIFGVLAAVAP. At 180 to 189 the chain is on the extracellular side; it reads EYFSYTISRM. The chain crosses the membrane as a helical span at residues 190–210; sequence IVGATTSGVFLVAYVIALEMV. At 211-219 the chain is on the cytoplasmic side; the sequence is GSSYRLFAG. The helical transmembrane segment at 220–240 threads the bilayer; that stretch reads VAMQMFFSVGFMLTAGFAYFI. At 241–244 the chain is on the extracellular side; that stretch reads HDWR. A helical membrane pass occupies residues 245 to 265; that stretch reads WLQIAITLPGLLFLCYYWIIP. Over 266-337 the chain is Cytoplasmic; that stretch reads ESARWLLMKG…LLRYPNLRRK (72 aa). The chain crosses the membrane as a helical span at residues 338-358; the sequence is TLLIFFDWFVNSGVYYGLSWN. The Extracellular portion of the chain corresponds to 359 to 366; it reads TNNLGGNQ. A helical membrane pass occupies residues 367-387; that stretch reads LVNFMISGAVEIPGYTLLLFT. Residues 388–395 lie on the Cytoplasmic side of the membrane; sequence LNRWGRRS. Residues 396-416 traverse the membrane as a helical segment; that stretch reads ILCGTMMVAGISLLATIFVPS. Topologically, residues 417–419 are extracellular; sequence DMN. The chain crosses the membrane as a helical span at residues 420–440; it reads WLIVACAMIGKLAITSSYGTI. The Cytoplasmic portion of the chain corresponds to 441–453; sequence YIFSAEQFPTVVR. Residues 454 to 474 form a helical membrane-spanning segment; the sequence is NVGLGASSMVARVGGILAPYL. Over 475-482 the chain is Extracellular; it reads KLLGEIWR. The helical transmembrane segment at 483–503 threads the bilayer; that stretch reads PLPLIICGALSLTAGLLSLLL. Residues 504 to 548 are Cytoplasmic-facing; the sequence is PETLNKPMPETIEDGENFGKKPAPQETAEEGGTQELSGMLNGKSG. The disordered stretch occupies residues 512–548; it reads PETIEDGENFGKKPAPQETAEEGGTQELSGMLNGKSG.

It belongs to the major facilitator (TC 2.A.1) superfamily. Organic cation transporter (TC 2.A.1.19) family. As to expression, expressed in embryos and adults at low level. Expressed at higher level in third instar larvae.

Its subcellular location is the membrane. Its function is as follows. Probably transports organic cations. The chain is Organic cation transporter protein (Orct) from Drosophila melanogaster (Fruit fly).